A 230-amino-acid chain; its full sequence is Cytidylate kinase (230 aa).

12–20 contacts ATP; sequence GPSGAGKGT.

Belongs to the cytidylate kinase family. Type 1 subfamily.

The protein localises to the cytoplasm. It catalyses the reaction CMP + ATP = CDP + ADP. It carries out the reaction dCMP + ATP = dCDP + ADP. In Shewanella oneidensis (strain ATCC 700550 / JCM 31522 / CIP 106686 / LMG 19005 / NCIMB 14063 / MR-1), this protein is Cytidylate kinase.